The following is a 161-amino-acid chain: MDVTIQHPWFKRALGPFYHNRLFDQFFGEGLFEYDLLPFQSLFRTVLDSGISEVRSDRDQFLILLDHFSPEDLTVKVLDDFVEIHGKHNERQDDHGYISREFHRRYRLPSNVDKSALSCSLSADGMLTFCGPKVQSGMDASHSERAIPVSREEKASSAPNS.

Residue methionine 1 is modified to N-acetylmethionine. Residues 1–53 (MDVTIQHPWFKRALGPFYHNRLFDQFFGEGLFEYDLLPFQSLFRTVLDSGISE) are required for complex formation with BFSP1 and BFSP2. Deamidated glutamine; partial is present on residues glutamine 6 and glutamine 40. The 110-residue stretch at 41–150 (SLFRTVLDSG…SHSERAIPVS (110 aa)) folds into the sHSP domain. Position 87 is an N6-acetyllysine (lysine 87). Histidine 88 lines the Zn(2+) pocket. Asparagine 89 is modified (deamidated asparagine; partial). Zn(2+) is bound by residues glutamate 90 and histidine 95. Serine 110 carries the phosphoserine modification. Position 111 is a deamidated asparagine; partial (asparagine 111). Cysteine 119 and cysteine 130 form a disulfide bridge. The residue at position 135 (glutamine 135) is a Deamidated glutamine; partial. The segment at 135 to 161 (QSGMDASHSERAIPVSREEKASSAPNS) is disordered. Positions 141–155 (SHSERAIPVSREEKA) are enriched in basic and acidic residues. Histidine 142 is a Zn(2+) binding site. Serine 150 carries an O-linked (GlcNAc) serine glycan.

It belongs to the small heat shock protein (HSP20) family. In terms of assembly, heteromer composed of three CRYAA and one CRYAB subunits. Inter-subunit bridging via zinc ions enhances stability, which is crucial as there is no protein turn over in the lens. Can also form homodimers and homotetramers (dimers of dimers) which serve as the building blocks of homooligomers. Within homooligomers, the zinc-binding motif is created from residues of 3 different molecules. His-88 and Glu-90 from one molecule are ligands of the zinc ion, and His-95 and His-142 residues from additional molecules complete the site with tetrahedral coordination geometry. Part of a complex required for lens intermediate filament formation composed of BFSP1, BFSP2 and CRYAA. Undergoes age-dependent proteolytical cleavage at the C-terminus.

Its subcellular location is the cytoplasm. It is found in the nucleus. Its function is as follows. Contributes to the transparency and refractive index of the lens. In its oxidized form (absence of intramolecular disulfide bond), acts as a chaperone, preventing aggregation of various proteins under a wide range of stress conditions. Required for the correct formation of lens intermediate filaments as part of a complex composed of BFSP1, BFSP2 and CRYAA. The chain is Alpha-crystallin A chain (CRYAA) from Trichechus inunguis (Amazon manatee).